The primary structure comprises 290 residues: Potassium-transporting ATPase subunit beta (290 aa).

Residues M1–R36 are Cytoplasmic-facing. Residues W37–L57 traverse the membrane as a helical; Signal-anchor for type II membrane protein segment. The Extracellular segment spans residues C58–Q290. Residues N99, N103, N130, N146, and N161 are each glycosylated (N-linked (GlcNAc...) asparagine). Residues C131 and C152 are joined by a disulfide bond. A disulfide bond links C162 and C178. Residues N193 and N221 are each glycosylated (N-linked (GlcNAc...) asparagine). Residues S194–Q290 form an immunoglobulin-like region. C201 and C262 are oxidised to a cystine.

It belongs to the X(+)/potassium ATPases subunit beta family. In terms of assembly, the ATPase pump is composed of two subunits: alpha (catalytic) and beta (regulatory). Interacts with alpha subunit ATP12A; this interaction is required for the formation of a functionally active pump and targeting at the plasma membrane. Interacts (via N-terminus) with alpha subunit ATP4A (via the P-domain). Post-translationally, N-glycosylation is necessary for assembly and functional expression of the pump at the plasma membrane.

The protein localises to the apical cell membrane. Its subcellular location is the cell membrane. Its function is as follows. The beta subunit of the gastric H(+)/K(+) ATPase pump which transports H(+) ions in exchange for K(+) ions across the apical membrane of parietal cells. Plays a structural and regulatory role in the assembly and membrane targeting of a functionally active pump. Within a transport cycle, the transfer of a H(+) ion across the membrane is coupled to ATP hydrolysis and is associated with a transient phosphorylation of the alpha subunit that shifts the pump conformation from inward-facing (E1) to outward-facing state (E2). Interacts with the phosphorylation domain of the alpha subunit and functions as a ratchet, stabilizing the lumenal-open E2 conformation and preventing the reverse reaction of the transport cycle. In Canis lupus familiaris (Dog), this protein is Potassium-transporting ATPase subunit beta (ATP4B).